The primary structure comprises 190 residues: Bifunctional protein PyrR (190 aa).

A PRPP-binding motif is present at residues 112–124 (VILVDDVLYSGRS).

Belongs to the purine/pyrimidine phosphoribosyltransferase family. PyrR subfamily.

The enzyme catalyses UMP + diphosphate = 5-phospho-alpha-D-ribose 1-diphosphate + uracil. Regulates the transcription of the pyrimidine nucleotide (pyr) operon in response to exogenous pyrimidines. Its function is as follows. Also displays a weak uracil phosphoribosyltransferase activity which is not physiologically significant. The polypeptide is Bifunctional protein PyrR (Mycolicibacterium paratuberculosis (strain ATCC BAA-968 / K-10) (Mycobacterium paratuberculosis)).